Here is a 278-residue protein sequence, read N- to C-terminus: Phage-like element PBSX protein XkdB (278 aa).

Residues L58–L80 constitute a DNA-binding region (H-T-H motif). 2 disordered regions span residues S117–I136 and Q239–V278. Positions K248–T263 are enriched in basic and acidic residues.

It to B.subtilis YqaL.

This is Phage-like element PBSX protein XkdB (xkdB) from Bacillus subtilis (strain 168).